Consider the following 453-residue polypeptide: Putative sodium-coupled neutral amino acid transporter 11 (453 aa).

A compositionally biased stretch (polar residues) spans Met1 to Gly10. The tract at residues Met1–Ser34 is disordered. Over residues Arg14–Gly32 the composition is skewed to basic and acidic residues. Transmembrane regions (helical) follow at residues Ala39–Met59, Leu66–Ile86, Gly106–Ile126, Gly150–Leu170, Leu179–Thr199, Ala222–Val242, Ile262–Gly282, Val299–Phe319, Val337–Ile357, Cys359–Ile379, and Ile398–Ala418. Residues Asn438 and Asn443 are each glycosylated (N-linked (GlcNAc...) asparagine).

This sequence belongs to the amino acid/polyamine transporter 2 family.

It localises to the membrane. Putative sodium-dependent amino acid/proton antiporter. The chain is Putative sodium-coupled neutral amino acid transporter 11 (Slc38a11) from Mus musculus (Mouse).